Here is an 814-residue protein sequence, read N- to C-terminus: Protein kinase C-binding protein NELL2 (814 aa).

Positions methionine 1–glycine 19 are cleaved as a signal peptide. N-linked (GlcNAc...) asparagine glycosylation is found at asparagine 51, asparagine 223, and asparagine 296. The 174-residue stretch at serine 53 to cysteine 226 folds into the Laminin G-like domain. In terms of domain architecture, VWFC 1 spans arginine 270–glutamine 329. Positions glycine 395 to glutamate 437 constitute an EGF-like 1 domain. 3 disulfide bridges follow: cysteine 399–cysteine 411, cysteine 405–cysteine 420, and cysteine 422–cysteine 436. The Ca(2+) site is built by aspartate 438, isoleucine 439, and glutamate 441. An EGF-like 2; calcium-binding domain is found at aspartate 438–threonine 479. Disulfide bonds link cysteine 442–cysteine 455, cysteine 449–cysteine 464, cysteine 466–cysteine 478, cysteine 484–cysteine 497, cysteine 491–cysteine 506, cysteine 508–cysteine 519, cysteine 523–cysteine 533, cysteine 527–cysteine 539, and cysteine 541–cysteine 550. The Ca(2+) site is built by asparagine 457, threonine 458, and serine 461. One can recognise an EGF-like 3; calcium-binding domain in the interval glutamate 480–arginine 520. The N-linked (GlcNAc...) asparagine glycan is linked to asparagine 515. The EGF-like 4 domain occupies alanine 521 to glutamate 551. Positions 553, 554, and 556 each coordinate Ca(2+). The region spanning aspartate 553–glutamate 599 is the EGF-like 5; calcium-binding domain. Cystine bridges form between cysteine 557-cysteine 570, cysteine 564-cysteine 579, and cysteine 581-cysteine 598. Ca(2+) contacts are provided by asparagine 572, leucine 573, and tryptophan 576. 3 residues coordinate Ca(2+): aspartate 600, isoleucine 601, and glutamate 603. The region spanning aspartate 600–serine 635 is the EGF-like 6; calcium-binding domain. 3 disulfides stabilise this stretch: cysteine 604–cysteine 617, cysteine 611–cysteine 626, and cysteine 628–cysteine 634. A glycan (N-linked (GlcNAc...) asparagine) is linked at asparagine 613. Asparagine 619, leucine 620, and glycine 623 together coordinate Ca(2+). Asparagine 633 carries N-linked (GlcNAc...) asparagine glycosylation. VWFC domains are found at residues glycine 636–aspartate 691 and serine 696–valine 754.

Homotrimer.

It is found in the secreted. Its function is as follows. May regulate neuronal differentiation, polarization and axon guidance. The chain is Protein kinase C-binding protein NELL2 (nell2.L) from Xenopus laevis (African clawed frog).